A 513-amino-acid polypeptide reads, in one-letter code: MQLNSTEISDLIKQRIEQFEVVSEARNEGTIVSVTDGIIRIHGLADCMQGEMIELPGNRYAIALNLERDSIGAVVMGPYADLTEGVKVYTTGRILEVPVGPGLLGRVVNTLGAPIDGKGALDNDGFEPVEKIAPGVIERKSVDEPVQTGYKSIDAMIPVGRGQRELIIGDRQTGKTALAIDAIINQKGTGVKCVYVAIGQKASTIANVVRKLEEHGALANTIVVVASASESAALQYLAPFAGCTMGEYFRDRGENALIVYDDLSKQAVAYRQISLLLKRPPGREAYPGDVFYLHSRLLERASRVNAEYVEKFTNGEVKGTTGSLTALPIIETQGGDVSAFVPTNVISITDGQIFLETDLFNSGIRPAVNAGISVSRVGGAAQTKIVKKLGGGIRLALAQYRELAAFSQFASDLDDATRAQLEHGERVTELMKQKQYAPMSVAEMSLSLFAAEKGFLQDIEIAKIMDFEAALLSYANSTYAELVAQINETGNYNAEIEAQLKELLTKFKSTQTW.

169–176 (GDRQTGKT) contacts ATP.

It belongs to the ATPase alpha/beta chains family. F-type ATPases have 2 components, CF(1) - the catalytic core - and CF(0) - the membrane proton channel. CF(1) has five subunits: alpha(3), beta(3), gamma(1), delta(1), epsilon(1). CF(0) has three main subunits: a(1), b(2) and c(9-12). The alpha and beta chains form an alternating ring which encloses part of the gamma chain. CF(1) is attached to CF(0) by a central stalk formed by the gamma and epsilon chains, while a peripheral stalk is formed by the delta and b chains.

It is found in the cell inner membrane. It catalyses the reaction ATP + H2O + 4 H(+)(in) = ADP + phosphate + 5 H(+)(out). Produces ATP from ADP in the presence of a proton gradient across the membrane. The alpha chain is a regulatory subunit. In Pseudoalteromonas translucida (strain TAC 125), this protein is ATP synthase subunit alpha.